The chain runs to 567 residues: DNA ligase B (567 aa).

K132 (N6-AMP-lysine intermediate) is an active-site residue.

Belongs to the NAD-dependent DNA ligase family. LigB subfamily.

It catalyses the reaction NAD(+) + (deoxyribonucleotide)n-3'-hydroxyl + 5'-phospho-(deoxyribonucleotide)m = (deoxyribonucleotide)n+m + AMP + beta-nicotinamide D-nucleotide.. Functionally, catalyzes the formation of phosphodiester linkages between 5'-phosphoryl and 3'-hydroxyl groups in double-stranded DNA using NAD as a coenzyme and as the energy source for the reaction. In Yersinia pseudotuberculosis serotype IB (strain PB1/+), this protein is DNA ligase B.